The following is a 123-amino-acid chain: Small ribosomal subunit protein uS12 (123 aa).

Aspartate 89 bears the 3-methylthioaspartic acid mark.

This sequence belongs to the universal ribosomal protein uS12 family. Part of the 30S ribosomal subunit. Contacts proteins S8 and S17. May interact with IF1 in the 30S initiation complex.

Functionally, with S4 and S5 plays an important role in translational accuracy. Interacts with and stabilizes bases of the 16S rRNA that are involved in tRNA selection in the A site and with the mRNA backbone. Located at the interface of the 30S and 50S subunits, it traverses the body of the 30S subunit contacting proteins on the other side and probably holding the rRNA structure together. The combined cluster of proteins S8, S12 and S17 appears to hold together the shoulder and platform of the 30S subunit. The protein is Small ribosomal subunit protein uS12 of Caulobacter vibrioides (strain ATCC 19089 / CIP 103742 / CB 15) (Caulobacter crescentus).